We begin with the raw amino-acid sequence, 77 residues long: U8-lycotoxin-Ls1q (77 aa).

Residues 1-20 form the signal peptide; sequence MKLMIFAGLVLFAIVSLIEA. A propeptide spanning residues 21-26 is cleaved from the precursor; sequence QAEHEK.

It belongs to the neurotoxin 19 (CSTX) family. 08 (U8-Lctx) subfamily. Contains 4 disulfide bonds. Expressed by the venom gland.

It localises to the secreted. In Lycosa singoriensis (Wolf spider), this protein is U8-lycotoxin-Ls1q.